Here is a 526-residue protein sequence, read N- to C-terminus: MSELEFEIERRRTFAIISHPDAGKTTLTEKLLLFGGAIQLAGSVKGRKATRHATSDWMEMEKQRGISVTTSVMQFQHRDRIFNLLDTPGHEDFSEDTYRTLTAVDSALMVIDSAKGVEERTIKLMEVCRLRDTPILTFINKLDREGREPVELLDEVERVLNIQCAPITWPIGMGKRFKGVYHLYEDAIHLFSASHGDRIVKGEVVEGLNSPKLDELLGDIADELRMEIELVRGASHEFDPDAYRAGRQTPVFFGSAINNFGILELLDAFAEYAPPPQARQARERLVAPGEDKFSGFVFKIQANMDPAHRDRIAFLRVCSGRYTKGVRLFHVRSGKAMQVANAITFQADSRENVEEAYPGDIIGLHNHGTIQVGDTFTQGENLKFEGIPSFAPELFRRVVLKDPLRSKALQRGLQQLSEEGATQLFKPLRNNDLILGAVGVLQFDVTAFRLKAEYNVDCVYEAVPVTTARWVSCSDPKKLEEFKRKVHDNLAEDGSGYLVYLATSRVNLSLTEERWPEIRFSATREL.

A tr-type G domain is found at 9 to 277; that stretch reads ERRRTFAIIS…AFAEYAPPPQ (269 aa). GTP-binding positions include 18-25, 86-90, and 140-143; these read SHPDAGKT, DTPGH, and NKLD.

This sequence belongs to the TRAFAC class translation factor GTPase superfamily. Classic translation factor GTPase family. PrfC subfamily.

It localises to the cytoplasm. In terms of biological role, increases the formation of ribosomal termination complexes and stimulates activities of RF-1 and RF-2. It binds guanine nucleotides and has strong preference for UGA stop codons. It may interact directly with the ribosome. The stimulation of RF-1 and RF-2 is significantly reduced by GTP and GDP, but not by GMP. The sequence is that of Peptide chain release factor 3 from Methylococcus capsulatus (strain ATCC 33009 / NCIMB 11132 / Bath).